The primary structure comprises 377 residues: Succinyl-diaminopimelate desuccinylase (377 aa).

His-66 contacts Zn(2+). Residue Asp-68 is part of the active site. Asp-99 is a Zn(2+) binding site. The active-site Proton acceptor is the Glu-133. Residues Glu-134, Glu-162, and His-348 each coordinate Zn(2+).

Belongs to the peptidase M20A family. DapE subfamily. As to quaternary structure, homodimer. Requires Zn(2+) as cofactor. Co(2+) is required as a cofactor.

The catalysed reaction is N-succinyl-(2S,6S)-2,6-diaminopimelate + H2O = (2S,6S)-2,6-diaminopimelate + succinate. It participates in amino-acid biosynthesis; L-lysine biosynthesis via DAP pathway; LL-2,6-diaminopimelate from (S)-tetrahydrodipicolinate (succinylase route): step 3/3. In terms of biological role, catalyzes the hydrolysis of N-succinyl-L,L-diaminopimelic acid (SDAP), forming succinate and LL-2,6-diaminopimelate (DAP), an intermediate involved in the bacterial biosynthesis of lysine and meso-diaminopimelic acid, an essential component of bacterial cell walls. The sequence is that of Succinyl-diaminopimelate desuccinylase from Alcanivorax borkumensis (strain ATCC 700651 / DSM 11573 / NCIMB 13689 / SK2).